The chain runs to 394 residues: Peroxisomal membrane protein PEX25 (394 aa).

Positions M1–D25 are enriched in polar residues. A disordered region spans residues M1–A65. At M1–Y366 the chain is on the cytoplasmic side. Positions S51–A65 are enriched in basic and acidic residues. A phosphoserine mark is found at S58, S63, and S289. The helical transmembrane segment at A367 to I383 threads the bilayer. Topologically, residues T384 to D394 are lumenal.

In terms of assembly, homooligomer. Interacts with PEX27 and PEX34.

It is found in the peroxisome membrane. Required for regulation of peroxisome size and maintenance. Has a role in the import of peroxisomal matrix proteins. Imports RHO1 into the peroxisome. Also promotes peroxisome division and biogenesis. The polypeptide is Peroxisomal membrane protein PEX25 (PEX25) (Saccharomyces cerevisiae (strain ATCC 204508 / S288c) (Baker's yeast)).